The primary structure comprises 254 residues: MGIIESIILGIVEGLTEFLPVSSTGHLILVSKLLGLEQTDAHKAFEVAIQSGAILAVVFLYREKLTHSIDLWKRLIIAFIPTGILGFLLYKIIKGLFSPYIVSIMLIVGGLVFIAVEFFYKKSEHQIDDILKIPYYKAFFIGVFQSIAMIPGTSRSGATIIGGLLLGLDRKTAAEFSFLLAVPTMFAATSYDIMKNYHHFHIENWIALLTGFVTAFVFAVLAIKLFIGFVSRYNFVPFGIYRIILGFIFLLFVL.

The next 8 membrane-spanning stretches (helical) occupy residues 1–21 (MGII…FLPV), 41–61 (AHKA…VFLY), 75–95 (LIIA…IIKG), 96–116 (LFSP…FIAV), 130–150 (ILKI…IAMI), 174–194 (AEFS…YDIM), 210–230 (TGFV…IGFV), and 234–254 (NFVP…LFVL).

The protein belongs to the UppP family.

It localises to the cell inner membrane. The enzyme catalyses di-trans,octa-cis-undecaprenyl diphosphate + H2O = di-trans,octa-cis-undecaprenyl phosphate + phosphate + H(+). Catalyzes the dephosphorylation of undecaprenyl diphosphate (UPP). Confers resistance to bacitracin. This chain is Undecaprenyl-diphosphatase, found in Persephonella marina (strain DSM 14350 / EX-H1).